Consider the following 178-residue polypeptide: ATP synthase subunit delta (178 aa).

Belongs to the ATPase delta chain family. In terms of assembly, F-type ATPases have 2 components, F(1) - the catalytic core - and F(0) - the membrane proton channel. F(1) has five subunits: alpha(3), beta(3), gamma(1), delta(1), epsilon(1). F(0) has three main subunits: a(1), b(2) and c(10-14). The alpha and beta chains form an alternating ring which encloses part of the gamma chain. F(1) is attached to F(0) by a central stalk formed by the gamma and epsilon chains, while a peripheral stalk is formed by the delta and b chains.

It is found in the cell inner membrane. In terms of biological role, f(1)F(0) ATP synthase produces ATP from ADP in the presence of a proton or sodium gradient. F-type ATPases consist of two structural domains, F(1) containing the extramembraneous catalytic core and F(0) containing the membrane proton channel, linked together by a central stalk and a peripheral stalk. During catalysis, ATP synthesis in the catalytic domain of F(1) is coupled via a rotary mechanism of the central stalk subunits to proton translocation. Its function is as follows. This protein is part of the stalk that links CF(0) to CF(1). It either transmits conformational changes from CF(0) to CF(1) or is implicated in proton conduction. In Pseudomonas putida (strain ATCC 700007 / DSM 6899 / JCM 31910 / BCRC 17059 / LMG 24140 / F1), this protein is ATP synthase subunit delta.